The following is a 178-amino-acid chain: Non-specific lipid transfer protein-like 1 (178 aa).

Residues 1–26 (MAVAARAAAVACLLVVGLAAVAGVDG) form the signal peptide. 2 disulfides stabilise this stretch: cysteine 50–cysteine 68 and cysteine 69–cysteine 110. N-linked (GlcNAc...) asparagine glycosylation is present at asparagine 99. Alanine 149 is lipidated: GPI-anchor amidated alanine. Residues 150–178 (AARSPMASTTAVLVVAAAVAAPLLAFFHF) constitute a propeptide, removed in mature form.

It belongs to the plant LTP family. O-glycosylated on hydroxyprolines; noncontiguous hydroxylproline residues are glycosylated with arabinogalactan. In terms of tissue distribution, expressed in roots, stems, leaves, flowers and seeds.

The protein resides in the vacuole. It localises to the aleurone grain membrane. In Oryza sativa subsp. japonica (Rice), this protein is Non-specific lipid transfer protein-like 1 (LTPL1).